The following is a 3375-amino-acid chain: Basement membrane proteoglycan (3375 aa).

An N-terminal signal peptide occupies residues 1 to 22 (MKRSSTVLAALLALLLVATNDA). The Ig-like C2-type 1 domain maps to 45 to 130 (VQITVFPSEK…NTVEARATLS (86 aa)). 11 cysteine pairs are disulfide-bonded: Cys-66–Cys-114, Cys-149–Cys-161, Cys-156–Cys-174, Cys-168–Cys-183, Cys-190–Cys-202, Cys-197–Cys-215, Cys-209–Cys-224, Cys-233–Cys-246, Cys-240–Cys-259, Cys-253–Cys-268, and Cys-293–Cys-344. 3 LDL-receptor class A domains span residues 148–184 (QCMA…ANCP), 189–225 (TCEP…LNCN), and 232–269 (DCKP…VGCV). One can recognise an Ig-like C2-type 2 domain in the interval 271–355 (PTVVDPPQTN…AINVKGRVLA (85 aa)). The interval 364-385 (VDDPRPQPPQPPTAPPQRASCD) is disordered. Over residues 369–378 (PQPPQPPTAP) the composition is skewed to pro residues. Disulfide bonds link Cys-384-Cys-400, Cys-402-Cys-411, and Cys-414-Cys-429. One can recognise a Laminin EGF-like 1; truncated domain in the interval 384–431 (CDTRGAVTPYPNNYGTCECKSQVTGPNCDQCKPGAFHLSEKSPEGCLK). The Laminin EGF-like 2; first part domain maps to 432–441 (CFCFGVSNDC). The 184-residue stretch at 450-633 (KDRLMFAGDA…PDGLALEVEQ (184 aa)) folds into the Laminin IV type A 1 domain. Intrachain disulfides connect Cys-634–Cys-648, Cys-636–Cys-689, Cys-691–Cys-700, and Cys-703–Cys-718. The 33-residue stretch at 634–666 (CVCPPGYLGTSCEDCAPGYERSGYGPYLGTCVP) folds into the Laminin EGF-like 2; second part domain. The Laminin EGF-like 3; truncated domain occupies 674–720 (CGPGAVAPTAPAQGQCQCKASVIGPNCDRCAPNSFGLAPTNPQGCIP). The 10-residue stretch at 721 to 730 (CFCSGVTQQC) folds into the Laminin EGF-like 4; first part domain. A Laminin IV type A 2 domain is found at 740–921 (VSIDYARGDR…QGLTAAEVEQ (182 aa)). Residues 922–954 (CICPPGYVGTSCEDCAPGYSRTGGGLYLGLCEK) form the Laminin EGF-like 4; second part domain. Cystine bridges form between Cys-955/Cys-964, Cys-957/Cys-971, Cys-974/Cys-983, Cys-986/Cys-1002, Cys-1011/Cys-1021, Cys-1013/Cys-1027, Cys-1030/Cys-1039, Cys-1042/Cys-1058, Cys-1061/Cys-1069, Cys-1063/Cys-1079, Cys-1082/Cys-1091, Cys-1094/Cys-1109, Cys-1152/Cys-1200, Cys-1247/Cys-1294, and Cys-1338/Cys-1384. Laminin EGF-like domains are found at residues 955–1004 (CECN…DCQP), 1011–1060 (CHCN…DCTP), and 1061–1111 (CPCP…VCEP). 15 consecutive Ig-like C2-type domains span residues 1126-1222 (PHEV…KRIS), 1226-1311 (PQPV…AVLE), 1319-1401 (PKVD…EPVQ), 1410-1499 (PQRG…ARLN), 1503-1585 (PQAI…RPVE), 1588-1680 (PARV…TPAT), 1690-1785 (PQVE…STLN), 1793-1878 (PRPV…VRLE), 1886-1970 (PTAV…GNVN), 1973-2069 (PSLT…IYIE), 2073-2163 (PSRI…AVHV), 2173-2260 (PKVE…TAVS), 2263-2343 (QQDK…GFVT), 2349-2435 (PDTI…RTVL), and 2446-2530 (TFTV…VDLQ). A compositionally biased stretch (polar residues) spans 1388-1400 (DPSDNTPLQSEPV). Disordered stretches follow at residues 1388–1426 (DPSD…QTVN) and 1478–1497 (EYEC…PPAR). An N-linked (GlcNAc...) asparagine glycan is attached at Asn-1422. 4 disulfides stabilise this stretch: Cys-1435/Cys-1481, Cys-1527/Cys-1573, Cys-1618/Cys-1663, and Cys-1719/Cys-1767. Polar residues predominate over residues 1481 to 1497 (CTSTEPDGSTQLSPPAR). The segment at 1773 to 1792 (NSPPVKTNPSTLNVTPEGTP) is disordered. Residues 1776–1788 (PVKTNPSTLNVTP) show a composition bias toward polar residues. Cystine bridges form between Cys-1814–Cys-1861, Cys-1907–Cys-1954, Cys-1998–Cys-2053, Cys-2099–Cys-2147, Cys-2195–Cys-2242, Cys-2284–Cys-2329, Cys-2374–Cys-2420, Cys-2467–Cys-2514, Cys-2713–Cys-2725, Cys-2719–Cys-2736, Cys-2738–Cys-2747, Cys-2754–Cys-2764, Cys-2759–Cys-2773, Cys-2775–Cys-2784, and Cys-2935–Cys-2960. The disordered stretch occupies residues 1880–1918 (TEDQEPPTAVVEPRTWNGKPGERHQFRCITTGSPTPKIT). The span at 1907–1918 (CITTGSPTPKIT) shows a compositional bias: polar residues. A glycan (N-linked (GlcNAc...) asparagine) is linked at Asn-2476. Residues 2532–2713 (DDFIPVIDGE…PSSVVKYDAC (182 aa)) form the Laminin G-like 1 domain. Residues 2793–2960 (PLGFTSDTSF…LSSSGDISSC (168 aa)) form the Laminin G-like 2 domain. An N-linked (GlcNAc...) asparagine glycan is attached at Asn-2950. Positions 2952–2963 (SSSGDISSCEES) are enriched in low complexity. The segment at 2952 to 3124 (SSSGDISSCE…GTLPPDSSSE (173 aa)) is disordered. Composition is skewed to acidic residues over residues 2979-2990 (EEPEAVIEEPTT) and 2999-3010 (PITEEPTEEPTT). A compositionally biased stretch (low complexity) spans 3011 to 3033 (TEEPTTTEEPTTTTEEPTTTTTE). A compositionally biased stretch (basic and acidic residues) spans 3034–3044 (EPYHIYETSRD). Low complexity predominate over residues 3049–3079 (IIIPVETTTTSTTTTSTTEEPEAEPALVLPT). The span at 3081-3094 (PVEENDVSDEEEEI) shows a compositional bias: acidic residues. Intrachain disulfides connect Cys-3141-Cys-3152, Cys-3146-Cys-3162, Cys-3164-Cys-3173, and Cys-3333-Cys-3359. N-linked (GlcNAc...) asparagine glycans are attached at residues Asn-3143 and Asn-3156. In terms of domain architecture, Laminin G-like 3 spans 3180–3359 (EHAARFDGDA…AIDGKNVKPC (180 aa)).

In terms of assembly, component of an integrin containing attachment complex, composed of at least pat-2, pat-3, pat-4, pat-6, unc-52, unc-97 and unc-112. As to expression, detected on embryonic and adult body wall muscle cells (at protein level). Found in the basement membrane of all contractile tissues (at protein level). Expressed in gonadal sheath cells and spermatheca.

It is found in the secreted. Its subcellular location is the extracellular space. It localises to the extracellular matrix. The protein resides in the basement membrane. The protein localises to the cytoplasm. It is found in the myofibril. Its subcellular location is the sarcomere. It localises to the m line. In terms of biological role, component of an integrin containing attachment complex, which is required for muscle development and maintenance. Probable structural role in myofilament assembly and/or attachment of the myofilament lattice to the cell membrane. May be an extracellular anchor for integrin receptors in body wall muscles and myoepithelial sheath cells. During the formation of neuromuscular junctions at the larval stage, negatively regulates membrane protrusion from body wall muscles, probably downstream of the integrin complex formed by pat-2 and pat-3. Involved in ovulation. Required for normal lifespan. This is Basement membrane proteoglycan from Caenorhabditis elegans.